Reading from the N-terminus, the 457-residue chain is Multidrug resistance protein MdtK (457 aa).

The Cytoplasmic portion of the chain corresponds to 1–10 (MQKYISEARL). A helical transmembrane segment spans residues 11–31 (LLALAIPVILAQIAQTAMGFV). The Periplasmic portion of the chain corresponds to 32-52 (DTVMAGGYSATDMAAVAIGTS). A helical membrane pass occupies residues 53–73 (IWLPAILFGHGLLLALTPVIA). Over 74-92 (QLNGSGRRERIAHQVRQGF) the chain is Cytoplasmic. A helical membrane pass occupies residues 93 to 113 (WLAGFVSVLIMLVLWNAGYII). The Periplasmic segment spans residues 114–126 (RSMENIDPALADK). A helical membrane pass occupies residues 127 to 147 (AVGYLRALLWGAPGYLFFQVA). The Cytoplasmic portion of the chain corresponds to 148-159 (RNQCEGLAKTKP). The chain crosses the membrane as a helical span at residues 160–180 (GMVMGFIGLLVNIPVNYIFIY). At 181–188 (GHFGMPEL) the chain is on the periplasmic side. A helical membrane pass occupies residues 189–209 (GGVGCGVATAAVYWVMFLAMV). At 210–242 (SYIKRARSMRDIRNEKGTAKPDPAVMKRLIQLG) the chain is on the cytoplasmic side. The helical transmembrane segment at 243–263 (LPIALALFFEVTLFAVVALLV) threads the bilayer. Over 264-275 (SPLGIVDVAGHQ) the chain is Periplasmic. The helical transmembrane segment at 276-296 (IALNFSSLMFVLPMSLAAAVT) threads the bilayer. Residues 297-313 (IRVGYRLGQGSTLDAQT) lie on the Cytoplasmic side of the membrane. Residues 314 to 334 (AARTGLMVGVCMATLTAIFTV) traverse the membrane as a helical segment. Residues 335–349 (SLREQIALLYNDNPE) lie on the Periplasmic side of the membrane. The helical transmembrane segment at 350–370 (VVTLAAHLMLLAAVYQISDSI) threads the bilayer. At 371–386 (QVIGSGILRGYKDTRS) the chain is on the cytoplasmic side. A helical membrane pass occupies residues 387–407 (IFYITFTAYWVLGLPSGYILA). Residues 408–417 (LTDLVVEPMG) lie on the Periplasmic side of the membrane. A helical transmembrane segment spans residues 418–438 (PAGFWIGFIIGLTSAAIMMML). Residues 439–457 (RMRFLQRMPSAIILQRASR) are Cytoplasmic-facing.

The protein belongs to the multi antimicrobial extrusion (MATE) (TC 2.A.66.1) family. MdtK subfamily.

It is found in the cell inner membrane. Its function is as follows. Multidrug efflux pump that functions probably as a Na(+)/drug antiporter. This Shigella boydii serotype 4 (strain Sb227) protein is Multidrug resistance protein MdtK.